Reading from the N-terminus, the 445-residue chain is Phosphoglucosamine mutase (445 aa).

Residue S102 is the Phosphoserine intermediate of the active site. Mg(2+) contacts are provided by S102, D240, D242, and D244. Residue S102 is modified to Phosphoserine.

This sequence belongs to the phosphohexose mutase family. Requires Mg(2+) as cofactor. In terms of processing, activated by phosphorylation.

The catalysed reaction is alpha-D-glucosamine 1-phosphate = D-glucosamine 6-phosphate. Its function is as follows. Catalyzes the conversion of glucosamine-6-phosphate to glucosamine-1-phosphate. This chain is Phosphoglucosamine mutase, found in Mycobacterium ulcerans (strain Agy99).